A 212-amino-acid chain; its full sequence is Transcriptional regulator GfcR (212 aa).

Belongs to the purine/pyrimidine phosphoribosyltransferase family. GfcR subfamily.

DNA-binding transcriptional regulator that functions as a regulator of central sugar catabolic pathways. In Halobacterium salinarum (strain ATCC 29341 / DSM 671 / R1), this protein is Transcriptional regulator GfcR.